Consider the following 471-residue polypeptide: Putative multidrug resistance protein MdtD (471 aa).

The next 13 membrane-spanning stretches (helical) occupy residues 12-32 (LWIV…VNTA), 49-69 (MVIV…GWLA), 77-97 (IFFT…QSST), 106-126 (VLQG…VMKI), 138-158 (FVTL…GLLV), 165-185 (WIFL…LWLM), 197-217 (FSGF…LDGY), 225-245 (AGLG…LWHA), 263-285 (FSLG…FMTP), 290-312 (IGLG…GSMG), 342-362 (LLFM…VMLF), 396-416 (MVMQ…LGAF), and 431-451 (IFFW…LVFA).

The protein belongs to the major facilitator superfamily. TCR/Tet family.

Its subcellular location is the cell inner membrane. This Cronobacter sakazakii (strain ATCC BAA-894) (Enterobacter sakazakii) protein is Putative multidrug resistance protein MdtD.